Consider the following 180-residue polypeptide: MPQKPARCYTKRRSKAFSGPPYTRKEYIHGVPPPKIQKFVMGNPHGDYDYIVEVYVTERGQIRHNALEAARVAVHKYLSTTIGDQNYFFRVRVYPHHVLRENKMMAFAGADRLQEGMRQAFGKPVGTAARVYPGQAVLEVRVKKEHLDHAKEALRRGASKLPLPSRIRVIPLKEEAKAAA.

This sequence belongs to the universal ribosomal protein uL16 family.

This is Large ribosomal subunit protein uL16 from Hyperthermus butylicus (strain DSM 5456 / JCM 9403 / PLM1-5).